Consider the following 327-residue polypeptide: tRNA-dihydrouridine(20/20a) synthase (327 aa).

Residues 11-13 (PML) and Gln63 contribute to the FMN site. Cys93 (proton donor) is an active-site residue. Residues Lys132, His165, 205–207 (NGG), and 227–228 (GR) contribute to the FMN site.

Belongs to the Dus family. DusA subfamily. It depends on FMN as a cofactor.

It carries out the reaction 5,6-dihydrouridine(20) in tRNA + NADP(+) = uridine(20) in tRNA + NADPH + H(+). The catalysed reaction is 5,6-dihydrouridine(20) in tRNA + NAD(+) = uridine(20) in tRNA + NADH + H(+). It catalyses the reaction 5,6-dihydrouridine(20a) in tRNA + NADP(+) = uridine(20a) in tRNA + NADPH + H(+). The enzyme catalyses 5,6-dihydrouridine(20a) in tRNA + NAD(+) = uridine(20a) in tRNA + NADH + H(+). In terms of biological role, catalyzes the synthesis of 5,6-dihydrouridine (D), a modified base found in the D-loop of most tRNAs, via the reduction of the C5-C6 double bond in target uridines. Specifically modifies U20 and U20a in tRNAs. The chain is tRNA-dihydrouridine(20/20a) synthase from Vibrio cholerae serotype O1 (strain ATCC 39315 / El Tor Inaba N16961).